The primary structure comprises 257 residues: Receptor expression-enhancing protein 4 (257 aa).

Transmembrane regions (helical) follow at residues 1 to 21 (MVSWMICRLVVLIFGMLYPAY) and 42 to 62 (WIVFAIFMAAETFTDIFISWF). A phosphoserine mark is found at Ser-152 and Ser-194. The tract at residues 177-257 (VPRRRPPIGY…KKAMPSDMDS (81 aa)) is disordered. Thr-196 is subject to Phosphothreonine. Ser-202 and Ser-253 each carry phosphoserine.

This sequence belongs to the DP1 family.

The protein resides in the endoplasmic reticulum membrane. Microtubule-binding protein required to ensure proper cell division and nuclear envelope reassembly by sequestering the endoplasmic reticulum away from chromosomes during mitosis. Probably acts by clearing the endoplasmic reticulum membrane from metaphase chromosomes. The polypeptide is Receptor expression-enhancing protein 4 (Reep4) (Mus musculus (Mouse)).